A 404-amino-acid polypeptide reads, in one-letter code: Glucose-1-phosphate adenylyltransferase (404 aa).

Residues tyrosine 99, glycine 164, 179–180, and serine 197 each bind alpha-D-glucose 1-phosphate; that span reads EK.

Belongs to the bacterial/plant glucose-1-phosphate adenylyltransferase family. In terms of assembly, homotetramer.

The enzyme catalyses alpha-D-glucose 1-phosphate + ATP + H(+) = ADP-alpha-D-glucose + diphosphate. It participates in glycan biosynthesis; glycogen biosynthesis. In terms of biological role, involved in the biosynthesis of ADP-glucose, a building block required for the elongation reactions to produce glycogen. Catalyzes the reaction between ATP and alpha-D-glucose 1-phosphate (G1P) to produce pyrophosphate and ADP-Glc. In Rhodococcus opacus (strain B4), this protein is Glucose-1-phosphate adenylyltransferase.